The primary structure comprises 162 residues: uncharacterized protein (162 aa).

A run of 3 helical transmembrane segments spans residues Ala-28–Phe-50, Leu-57–Leu-76, and Tyr-108–Ala-130.

The protein localises to the cell membrane. This is an uncharacterized protein from Treponema pallidum (strain Nichols).